The sequence spans 569 residues: MIIFKNLLKLLIILLTIKLYFCIEIKREEHLTILNELNENSDVIQYSILPGNNEEYEIVKGIQEDAIVYGYYMSNVEVNGWAYLSLVSNDKYNDSTQSRAFGYLEGYLTKDLIWNSKVNYYKNAFNSSEIPNKLDDWLTENIESIHTFIVNNRKSRYWNQITLVMDQINGMLDGYNEANTNSSETLSLHDFFVLNMFGDLFDLMPALNLDKEYKYFQKDLNDIQDWFKRSQHCSALIKVSSDYSELYSGHTTWSGYYTMLRIFKSYNQQFSSDVSGTLSKRNIFSSYPGALISVDDFYLLGDTRMVVIETTNSLVTNDLYHLIRPTTVLSWMRVIVSNRMSTNGKEWCENFQRYNSGTYNNQWMIVSYNLFVPYNELKDGALYVLEQIPGYIEFSDQTQALRQGWWNSYNIPFYETIYDASGYNNYTANNYSDSTIYYMSYQTCPRAEIFRNFAGYVESLEDFQSLLRYNDFEYDPLSHKLPFYAIASRYDLSKKNPSPFGATDTKVTCNSMIDQNTIVAISGPTTSNGQPIFEWNSKIDFMESTSHLGCPEKYNFPWVSFSDTTFRNL.

An N-terminal signal peptide occupies residues 1–22 (MIIFKNLLKLLIILLTIKLYFC). N-linked (GlcNAc...) asparagine glycans are attached at residues asparagine 93, asparagine 126, asparagine 181, asparagine 425, and asparagine 430.

This sequence belongs to the phospholipase B-like family.

Its subcellular location is the secreted. In terms of biological role, probable phospholipase. The chain is Phospholipase B-like protein D (plbD) from Dictyostelium discoideum (Social amoeba).